The chain runs to 323 residues: RNA polymerase II holoenzyme cyclin-like subunit (323 aa).

In terms of domain architecture, Cyclin N-terminal spans 45–176 (DSKQNGIEQS…LLEELESYLI (132 aa)).

This sequence belongs to the cyclin family. Cyclin C subfamily. In terms of assembly, component of the SRB8-11 complex which consists of SRB8, SSN2/SRB9, SSN3/SRB10 and SSN8/SRB11. The SRB8-11 complex associates with the Mediator complex. The SSN3/SRB10 and SSN8/SRB11 kinase-cyclin pair also associate with the RNA polymerase II holoenzyme. Interacts with ASK10.

It is found in the nucleus. Component of the SRB8-11 complex. The SRB8-11 complex is a regulatory module of the Mediator complex which is itself involved in regulation of basal and activated RNA polymerase II-dependent transcription. The SRB8-11 complex may be involved in the transcriptional repression of a subset of genes regulated by Mediator. It may inhibit the association of the Mediator complex with RNA polymerase II to form the holoenzyme complex. The SRB8-11 complex phosphorylates the C-terminal domain (CTD) of the largest subunit of RNA polymerase II RPB1 at serines 2 and 5. The SSN3/SRB10 and SSN8/SRB11 kinase-cyclin pair may also positively and negatively regulate numerous transcriptional activators in response to changes in nutritional and physiological conditions. The sequence is that of RNA polymerase II holoenzyme cyclin-like subunit (SSN8) from Saccharomyces cerevisiae (strain ATCC 204508 / S288c) (Baker's yeast).